Reading from the N-terminus, the 403-residue chain is Na(+)-translocating NADH-quinone reductase subunit B (403 aa).

The next 9 helical transmembrane spans lie at 56 to 76 (MMITVWLCTFPAMFFGMWNTG), 121 to 141 (AYFLPIYAVTFIVGGFWEVLF), 163 to 183 (ILPPTIPLWQVALGISFGVVI), 220 to 240 (WTAVDGYAGATALSLGFAGGI), 258 to 278 (IHGSIGETSTLAIFIGGAVLI), 287 to 307 (IVTGVMLGMIALSTLFNLIGS), 312 to 332 (LFGMPWYWHMVVGGFAFGMIF), 348 to 368 (WVFGILIGVMVVLIRVVNPAF), and 371 to 391 (GMMLAILFANLCAPLIDHFVI). At Thr-230 the chain carries FMN phosphoryl threonine.

The protein belongs to the NqrB/RnfD family. Composed of six subunits; NqrA, NqrB, NqrC, NqrD, NqrE and NqrF. The cofactor is FMN.

It is found in the cell inner membrane. The enzyme catalyses a ubiquinone + n Na(+)(in) + NADH + H(+) = a ubiquinol + n Na(+)(out) + NAD(+). Functionally, NQR complex catalyzes the reduction of ubiquinone-1 to ubiquinol by two successive reactions, coupled with the transport of Na(+) ions from the cytoplasm to the periplasm. NqrA to NqrE are probably involved in the second step, the conversion of ubisemiquinone to ubiquinol. This Stutzerimonas stutzeri (strain A1501) (Pseudomonas stutzeri) protein is Na(+)-translocating NADH-quinone reductase subunit B.